A 289-amino-acid polypeptide reads, in one-letter code: Shikimate dehydrogenase (NADP(+)) (289 aa).

Shikimate contacts are provided by residues 22-24 and Thr-69; that span reads SRS. Lys-73 (proton acceptor) is an active-site residue. Residue Glu-85 participates in NADP(+) binding. Positions 94 and 109 each coordinate shikimate. Residues 134–138, 158–163, and Ile-226 contribute to the NADP(+) site; these read GAGGA and NRTLSR. Tyr-228 contributes to the shikimate binding site. Gly-249 contacts NADP(+).

This sequence belongs to the shikimate dehydrogenase family. In terms of assembly, homodimer.

The enzyme catalyses shikimate + NADP(+) = 3-dehydroshikimate + NADPH + H(+). It functions in the pathway metabolic intermediate biosynthesis; chorismate biosynthesis; chorismate from D-erythrose 4-phosphate and phosphoenolpyruvate: step 4/7. Involved in the biosynthesis of the chorismate, which leads to the biosynthesis of aromatic amino acids. Catalyzes the reversible NADPH linked reduction of 3-dehydroshikimate (DHSA) to yield shikimate (SA). This chain is Shikimate dehydrogenase (NADP(+)), found in Brucella melitensis biotype 2 (strain ATCC 23457).